The sequence spans 284 residues: 4-diphosphocytidyl-2-C-methyl-D-erythritol kinase (284 aa).

Lysine 17 is a catalytic residue. An ATP-binding site is contributed by 100 to 110; that stretch reads PMGGGLGGGSS. The active site involves aspartate 142.

The protein belongs to the GHMP kinase family. IspE subfamily.

It carries out the reaction 4-CDP-2-C-methyl-D-erythritol + ATP = 4-CDP-2-C-methyl-D-erythritol 2-phosphate + ADP + H(+). Its pathway is isoprenoid biosynthesis; isopentenyl diphosphate biosynthesis via DXP pathway; isopentenyl diphosphate from 1-deoxy-D-xylulose 5-phosphate: step 3/6. Its function is as follows. Catalyzes the phosphorylation of the position 2 hydroxy group of 4-diphosphocytidyl-2C-methyl-D-erythritol. This chain is 4-diphosphocytidyl-2-C-methyl-D-erythritol kinase, found in Aromatoleum aromaticum (strain DSM 19018 / LMG 30748 / EbN1) (Azoarcus sp. (strain EbN1)).